The following is a 285-amino-acid chain: Bifunctional protein FolD (285 aa).

Residues 165 to 167 (GRS) and serine 190 each bind NADP(+).

It belongs to the tetrahydrofolate dehydrogenase/cyclohydrolase family. As to quaternary structure, homodimer.

The catalysed reaction is (6R)-5,10-methylene-5,6,7,8-tetrahydrofolate + NADP(+) = (6R)-5,10-methenyltetrahydrofolate + NADPH. It catalyses the reaction (6R)-5,10-methenyltetrahydrofolate + H2O = (6R)-10-formyltetrahydrofolate + H(+). It functions in the pathway one-carbon metabolism; tetrahydrofolate interconversion. Functionally, catalyzes the oxidation of 5,10-methylenetetrahydrofolate to 5,10-methenyltetrahydrofolate and then the hydrolysis of 5,10-methenyltetrahydrofolate to 10-formyltetrahydrofolate. The polypeptide is Bifunctional protein FolD (Burkholderia thailandensis (strain ATCC 700388 / DSM 13276 / CCUG 48851 / CIP 106301 / E264)).